Here is a 123-residue protein sequence, read N- to C-terminus: Large ribosomal subunit protein uL18 (123 aa).

This sequence belongs to the universal ribosomal protein uL18 family. As to quaternary structure, part of the 50S ribosomal subunit; part of the 5S rRNA/L5/L18/L25 subcomplex. Contacts the 5S and 23S rRNAs.

In terms of biological role, this is one of the proteins that bind and probably mediate the attachment of the 5S RNA into the large ribosomal subunit, where it forms part of the central protuberance. The protein is Large ribosomal subunit protein uL18 of Chlamydia trachomatis serovar A (strain ATCC VR-571B / DSM 19440 / HAR-13).